Reading from the N-terminus, the 197-residue chain is Protein Hikeshi (197 aa).

The segment at 18 to 55 (VAEDKFVFDLPDYENINHVVVFMLGTVPFPEGMGGSVY) is required for F-X-F-G repeats-nucleoporins recognition and nuclear import. The interval 124-134 (QTPVGNAAVSS) is flexible linker region involved in nuclear import of HSP70 proteins.

The protein belongs to the OPI10 family. As to quaternary structure, forms an asymmetric homodimer; required for binding and nuclear import of HSP70 proteins. Interacts with ATP-bound HSP70 proteins. Interacts with NUP62 and NUP153 (via F-X-F-G repeats). Interacts with HSPA8.

It localises to the cytoplasm. The protein resides in the cytosol. Its subcellular location is the nucleus. Acts as a specific nuclear import carrier for HSP70 proteins following heat-shock stress: acts by mediating the nucleoporin-dependent translocation of ATP-bound HSP70 proteins into the nucleus. HSP70 proteins import is required to protect cells from heat shock damages. Does not translocate ADP-bound HSP70 proteins into the nucleus. The chain is Protein Hikeshi from Bos taurus (Bovine).